The primary structure comprises 93 residues: UPF0358 protein lwe1048 (93 aa).

Belongs to the UPF0358 family.

In Listeria welshimeri serovar 6b (strain ATCC 35897 / DSM 20650 / CCUG 15529 / CIP 8149 / NCTC 11857 / SLCC 5334 / V8), this protein is UPF0358 protein lwe1048.